Here is a 710-residue protein sequence, read N- to C-terminus: MFNKVTKTFQYGQHTVTLETGEIARQASGAVLVSIEDTVVLATVVARKDAKPGQDFFPLTVDYVEKTYAAGRIPGGFFKREGRPSEKETLTSRLIDRPIRPLFPEGYLNEVQIIIHVMSVNPEIDPDIAAMIGASAALSVSGIPFAGPLGAARVGYIDGQYILNPTATQLKTSQMDLVVAGTEAAVLMVESEAQQLSEEVMLGAVVFGHDQMKAVIDAIHDLVRDGGKPEVQWAPPAKNEALIARVAHFAEEKLRAAYQTKDKQARTAKLKDAFAEVNAEVAAEATSVGGAAPDTSEVGNILFDLEAKIVRSQILDGEPRIDGRDTRTVRPITIRTGVLPRTHGSALFTRGETQALVIATLGTARDEQKIDALMGEYSDRFMLHYNMPPFATGETGRVGTPKRREIGHGRLAKRALIAALPAPEDFSYSVRLVSEITESNGSSSMASVCGGCLALMDAGVPMQAHVAGIAMGLIKDGGKFAVLSDILGDEDHLGDMDFKVAGTANGITALQMDIKIQGITKEIMQVALAQAKEGRIHILGEMEKAVPSGTTGELSDFAPRLITIKINPEKIRDVIGKGGAVIRALTEETGTQIDISDEGVVTIASVDAAAGQEAKRRIEELTASVEVGKVYEGTVLKLLDFGAIVQVMPGKDGLLHISQIANERVNAVADYLKEGQQVRVKVLETDDRGRLKLSMKAALAEDNPEAAPQE.

Asp491 and Asp497 together coordinate Mg(2+). One can recognise a KH domain in the interval 559-618 (PRLITIKINPEKIRDVIGKGGAVIRALTEETGTQIDISDEGVVTIASVDAAAGQEAKRRI). Residues 628–696 (GKVYEGTVLK…DRGRLKLSMK (69 aa)) enclose the S1 motif domain.

It belongs to the polyribonucleotide nucleotidyltransferase family. Requires Mg(2+) as cofactor.

Its subcellular location is the cytoplasm. The enzyme catalyses RNA(n+1) + phosphate = RNA(n) + a ribonucleoside 5'-diphosphate. Involved in mRNA degradation. Catalyzes the phosphorolysis of single-stranded polyribonucleotides processively in the 3'- to 5'-direction. This Herminiimonas arsenicoxydans protein is Polyribonucleotide nucleotidyltransferase.